Reading from the N-terminus, the 356-residue chain is Alanine racemase, catabolic (356 aa).

Lys-35 functions as the Proton acceptor; specific for D-alanine in the catalytic mechanism. Position 35 is an N6-(pyridoxal phosphate)lysine (Lys-35). Residue Arg-130 coordinates substrate. The active-site Proton acceptor; specific for L-alanine is the Tyr-253. Met-301 is a binding site for substrate.

Belongs to the alanine racemase family. Requires pyridoxal 5'-phosphate as cofactor.

The enzyme catalyses L-alanine = D-alanine. Isomerizes L-alanine to D-alanine which is then oxidized to pyruvate by DadA. The sequence is that of Alanine racemase, catabolic (dadB) from Klebsiella aerogenes (Enterobacter aerogenes).